A 385-amino-acid chain; its full sequence is Protein pelota homolog (385 aa).

A Glycyl lysine isopeptide (Lys-Gly) (interchain with G-Cter in SUMO2) cross-link involves residue Lys162. Phosphoserine is present on residues Ser374, Ser380, Ser381, and Ser382.

Belongs to the eukaryotic release factor 1 family. Pelota subfamily. As to quaternary structure, component of the Pelota-HBS1L complex, also named Dom34-Hbs1 complex, composed of PELO and HBS1L. Interacts with PINK1. Interacts with ABCE1. Interacts with CNOT4. A divalent metal cation is required as a cofactor. As to expression, ubiquitously expressed.

The protein localises to the cytoplasm. Functionally, component of the Pelota-HBS1L complex, a complex that recognizes stalled ribosomes and triggers the No-Go Decay (NGD) pathway. In the Pelota-HBS1L complex, PELO recognizes ribosomes stalled at the 3' end of an mRNA and engages stalled ribosomes by destabilizing mRNA in the mRNA channel. Following mRNA extraction from stalled ribosomes by the SKI complex, the Pelota-HBS1L complex promotes recruitment of ABCE1, which drives the disassembly of stalled ribosomes, followed by degradation of damaged mRNAs as part of the NGD pathway. As part of the PINK1-regulated signaling, upon mitochondrial damage is recruited to the ribosome/mRNA-ribonucleoprotein complex associated to mitochondrial outer membrane thereby enabling the recruitment of autophagy receptors and induction of mitophagy. This chain is Protein pelota homolog, found in Homo sapiens (Human).